The sequence spans 427 residues: 3-phosphoshikimate 1-carboxyvinyltransferase (427 aa).

3-phosphoshikimate-binding residues include Lys-22, Ser-23, and Arg-27. Lys-22 is a phosphoenolpyruvate binding site. The phosphoenolpyruvate site is built by Gly-96 and Arg-124. Residues Ser-169, Ser-170, Gln-171, Ser-197, Asp-313, Asn-336, and Lys-340 each contribute to the 3-phosphoshikimate site. A phosphoenolpyruvate-binding site is contributed by Gln-171. The active-site Proton acceptor is Asp-313. Residues Arg-344, Arg-386, and Lys-411 each contribute to the phosphoenolpyruvate site.

The protein belongs to the EPSP synthase family. As to quaternary structure, monomer.

It is found in the cytoplasm. It carries out the reaction 3-phosphoshikimate + phosphoenolpyruvate = 5-O-(1-carboxyvinyl)-3-phosphoshikimate + phosphate. The protein operates within metabolic intermediate biosynthesis; chorismate biosynthesis; chorismate from D-erythrose 4-phosphate and phosphoenolpyruvate: step 6/7. Functionally, catalyzes the transfer of the enolpyruvyl moiety of phosphoenolpyruvate (PEP) to the 5-hydroxyl of shikimate-3-phosphate (S3P) to produce enolpyruvyl shikimate-3-phosphate and inorganic phosphate. The polypeptide is 3-phosphoshikimate 1-carboxyvinyltransferase (Salmonella arizonae (strain ATCC BAA-731 / CDC346-86 / RSK2980)).